A 240-amino-acid chain; its full sequence is UDP-2,3-diacylglucosamine hydrolase (240 aa).

Mn(2+) is bound by residues aspartate 8, histidine 10, aspartate 41, asparagine 79, and histidine 114. 79 to 80 (NR) is a binding site for substrate. Aspartate 122, serine 160, asparagine 164, lysine 167, and histidine 195 together coordinate substrate. 2 residues coordinate Mn(2+): histidine 195 and histidine 197.

The protein belongs to the LpxH family. It depends on Mn(2+) as a cofactor.

It is found in the cell inner membrane. The enzyme catalyses UDP-2-N,3-O-bis[(3R)-3-hydroxytetradecanoyl]-alpha-D-glucosamine + H2O = 2-N,3-O-bis[(3R)-3-hydroxytetradecanoyl]-alpha-D-glucosaminyl 1-phosphate + UMP + 2 H(+). Its pathway is glycolipid biosynthesis; lipid IV(A) biosynthesis; lipid IV(A) from (3R)-3-hydroxytetradecanoyl-[acyl-carrier-protein] and UDP-N-acetyl-alpha-D-glucosamine: step 4/6. Hydrolyzes the pyrophosphate bond of UDP-2,3-diacylglucosamine to yield 2,3-diacylglucosamine 1-phosphate (lipid X) and UMP by catalyzing the attack of water at the alpha-P atom. Involved in the biosynthesis of lipid A, a phosphorylated glycolipid that anchors the lipopolysaccharide to the outer membrane of the cell. This is UDP-2,3-diacylglucosamine hydrolase from Escherichia coli (strain SE11).